A 179-amino-acid polypeptide reads, in one-letter code: Large ribosomal subunit protein uL6 (179 aa).

It belongs to the universal ribosomal protein uL6 family. Part of the 50S ribosomal subunit.

Its function is as follows. This protein binds to the 23S rRNA, and is important in its secondary structure. It is located near the subunit interface in the base of the L7/L12 stalk, and near the tRNA binding site of the peptidyltransferase center. The protein is Large ribosomal subunit protein uL6 of Prochlorococcus marinus (strain SARG / CCMP1375 / SS120).